Here is a 200-residue protein sequence, read N- to C-terminus: Holliday junction branch migration complex subunit RuvA (200 aa).

The domain I stretch occupies residues 1-64 (MFAYFKGSLV…EDALQLYGFF (64 aa)). A domain II region spans residues 65–143 (KEEERQLFRL…KLPLVTPAAG (79 aa)). Positions 143–147 (GKAAM) are flexible linker. Residues 148–200 (PSHHVKDDAVHALVTLGFSRLLAQKAVSALLEEKPEQSVEEVIKYALATIHNS) are domain III.

This sequence belongs to the RuvA family. Homotetramer. Forms an RuvA(8)-RuvB(12)-Holliday junction (HJ) complex. HJ DNA is sandwiched between 2 RuvA tetramers; dsDNA enters through RuvA and exits via RuvB. An RuvB hexamer assembles on each DNA strand where it exits the tetramer. Each RuvB hexamer is contacted by two RuvA subunits (via domain III) on 2 adjacent RuvB subunits; this complex drives branch migration. In the full resolvosome a probable DNA-RuvA(4)-RuvB(12)-RuvC(2) complex forms which resolves the HJ.

It is found in the cytoplasm. The RuvA-RuvB-RuvC complex processes Holliday junction (HJ) DNA during genetic recombination and DNA repair, while the RuvA-RuvB complex plays an important role in the rescue of blocked DNA replication forks via replication fork reversal (RFR). RuvA specifically binds to HJ cruciform DNA, conferring on it an open structure. The RuvB hexamer acts as an ATP-dependent pump, pulling dsDNA into and through the RuvAB complex. HJ branch migration allows RuvC to scan DNA until it finds its consensus sequence, where it cleaves and resolves the cruciform DNA. The sequence is that of Holliday junction branch migration complex subunit RuvA from Chlorobium phaeobacteroides (strain DSM 266 / SMG 266 / 2430).